A 610-amino-acid polypeptide reads, in one-letter code: DEAD-box ATP-dependent RNA helicase 9, mitochondrial (610 aa).

The transit peptide at 1 to 66 (MISTVLRRSI…SSPFGVKVRD (66 aa)) directs the protein to the mitochondrion. The short motif at 116–144 (LAIADLGISPEIVKALKGRGIEKLFPIQK) is the Q motif element. One can recognise a Helicase ATP-binding domain in the interval 147–321 (LEPAMEGRDM…KKYLNNPLTI (175 aa)). An ATP-binding site is contributed by 160–167 (ARTGTGKT). The short motif at 269–272 (DEAD) is the DEAD box element. Positions 350-494 (IIGPLVKEHG…ELPSIAVERG (145 aa)) constitute a Helicase C-terminal domain. Over residues 542–557 (SGRSGGGGGSYGGSGG) the composition is skewed to gly residues. The interval 542-610 (SGRSGGGGGS…FGSNDGKRSY (69 aa)) is disordered. A compositionally biased stretch (low complexity) spans 558–572 (SSSRYSGGSDRSSGF). Positions 573–585 (GSFGSGGSSGGFG) are enriched in gly residues. The span at 586 to 596 (SDRSSQSSGRS) shows a compositional bias: low complexity.

It belongs to the DEAD box helicase family. DDX21/DDX50 subfamily.

It localises to the mitochondrion. The enzyme catalyses ATP + H2O = ADP + phosphate + H(+). The protein is DEAD-box ATP-dependent RNA helicase 9, mitochondrial (RH9) of Arabidopsis thaliana (Mouse-ear cress).